The following is a 30-amino-acid chain: Putative cytochrome bd-II ubiquinol oxidase subunit AppX (30 aa).

Residues 4–24 (LLWFVGILLMCSLSTLVLVWL) form a helical membrane-spanning segment.

The protein belongs to the cytochrome ubiquinol oxidase subunit X family. As to quaternary structure, able to interact with CydA and CydB upon overexpression.

It localises to the cell inner membrane. Might be part of cytochrome bd-II oxidase (appB and appC). Able to restore reductant resistance to a cydX deletion mutant upon overexpression. CydX and this protein may have some functional overlap. The sequence is that of Putative cytochrome bd-II ubiquinol oxidase subunit AppX (appX) from Escherichia coli (strain K12).